Consider the following 312-residue polypeptide: D-alanine--D-alanine ligase (312 aa).

Residues 103 to 303 enclose the ATP-grasp domain; that stretch reads KQQLVPHGIR…YADLVQAIVD (201 aa). Residue 130-186 coordinates ATP; sequence MPRPYVLKPVNEGSSVGVAIIKERDNHGVPIHRDSHGPWQTFATLLAEPFIRGRELT. Residues D254, E270, and N272 each coordinate Mg(2+).

Belongs to the D-alanine--D-alanine ligase family. Mg(2+) is required as a cofactor. Mn(2+) serves as cofactor.

It is found in the cytoplasm. The catalysed reaction is 2 D-alanine + ATP = D-alanyl-D-alanine + ADP + phosphate + H(+). It functions in the pathway cell wall biogenesis; peptidoglycan biosynthesis. Cell wall formation. The chain is D-alanine--D-alanine ligase from Rhizorhabdus wittichii (strain DSM 6014 / CCUG 31198 / JCM 15750 / NBRC 105917 / EY 4224 / RW1) (Sphingomonas wittichii).